The chain runs to 540 residues: Mitochondrial antiviral-signaling protein (540 aa).

Pro-2 carries the post-translational modification N-acetylproline. The Cytoplasmic segment spans residues 2 to 513 (PFAEDKTYKY…REVPCHRPSP (512 aa)). Residues Lys-7 and Lys-10 each participate in a glycyl lysine isopeptide (Lys-Gly) (interchain with G-Cter in ubiquitin) cross-link. In terms of domain architecture, CARD spans 10–77 (KYICRNFSNF…WVEYFIAALR (68 aa)). The tract at residues 10-77 (KYICRNFSNF…WVEYFIAALR (68 aa)) is required for interaction with NLRX1. Cys-79 carries the S-palmitoyl cysteine lipid modification. The disordered stretch occupies residues 95–297 (YQPRTSDRPP…EAPANSLPSK (203 aa)). Pro residues predominate over residues 106–122 (PLEPPSLPAERPGPPTP). The segment at 143–147 (PVQET) is interaction with TRAF2. Composition is skewed to polar residues over residues 145 to 165 (QETQ…QTLS) and 179 to 216 (ESSS…SLTP). Phosphoserine is present on residues Ser-152, Ser-157, Ser-165, Ser-180, and Ser-188. Residues 153–158 (PGENSE) form an interaction with TRAF6 region. At Thr-215 the chain carries Phosphothreonine. 2 positions are modified to phosphoserine: Ser-222 and Ser-233. Thr-234 bears the Phosphothreonine mark. Position 236 is an asymmetric dimethylarginine (Arg-236). Over residues 241 to 266 (PGPTGSVVSTGTSFSSSSPGLASAGA) the composition is skewed to low complexity. 2 positions are modified to phosphoserine: Ser-253 and Ser-258. Glycyl lysine isopeptide (Lys-Gly) (interchain with G-Cter in ubiquitin) cross-links involve residues Lys-311 and Lys-325. 2 disordered regions span residues 314-358 (ANPA…RAGM) and 373-419 (SAST…SELS). Composition is skewed to polar residues over residues 317-331 (ASVS…TSSK), 339-355 (NALT…NSTR), and 373-382 (SASTVPTDGS). Positions 388–403 (TPAAPTPAGATGGSSA) are enriched in low complexity. Ser-408 carries the post-translational modification Phosphoserine. The pLxIS motif motif lies at 439–442 (LAIS). Residue Ser-442 is modified to Phosphoserine; by TBK1. Residues 455-460 (PEENEY) are interaction with TRAF6. Residues Lys-461 and Lys-500 each participate in a glycyl lysine isopeptide (Lys-Gly) (interchain with G-Cter in ubiquitin) cross-link. Residue Lys-461 forms a (Microbial infection) Glycyl lysine isopeptide (Lys-Gly) (interchain with G-Cter in UFM1) linkage. Residues 476 to 507 (IQLLEGNPGPPADPDGGPRPQADRKFQEREVP) form a disordered region. Basic and acidic residues predominate over residues 496–507 (QADRKFQEREVP). A helical membrane pass occupies residues 514-534 (GALWLQVAVTGVLVVTLLVVL). The Mitochondrial intermembrane portion of the chain corresponds to 535–540 (YRRRLH).

As to quaternary structure, self-associates and polymerizes (via CARD domains) to form 400 nM long three-stranded helical filaments on mitochondria, filament nucleation requires interaction with RIGI whose CARD domains act as a template for filament assembly. Interacts with RIGI, IFIH1/MDA5, TRAF2, TRAF6 and C1QBP. May interact with FADD, RIPK1, CHUK and IKBKB. Interacts (when phosphorylated) with IRF3; following activation and phosphorylation on the pLxIS motif by TBK1, recruits IRF3. Interacts with NLRX1. Interaction with NLRX1 requires the CARD domain. Interacts with PSMA7. Interacts with TRAFD1. Interacts (via C-terminus) with PCBP2 in a complex containing MAVS/IPS1, PCBP2 and ITCH. Interacts with CYLD. Interacts with SRC. Interacts with DHX58/LGP2 and IKBKE. Interacts with STING1. Interacts with IFIT3 (via N-terminus). Interacts with TBK1 only in the presence of IFIT3. Interacts with TTLL12; the interaction prevents MAVS binding to TBK1 and IKBKE. Interacts with MUL1. Interacts with ANKRD17. Interacts with NDFIP1. Interacts with SMURF1; the interaction is mediated by NDFIP1 and leads to MAVS ubiquitination and degradation. Interacts with UBXN1; this interaction inhibits MAVS-mediated antiviral pathway. Interacts (via C-terminus) with GPATCH3; the interaction is markedly increased upon viral infection. Directly interacts (via CARD domain) with ATG5 and ATG12, either as ATG5 and ATG12 monomers or as ATG12-ATG5 conjugates. Interacts with DHX33 (via the helicase C-terminal domain). Interacts with DDX3X (via C-terminus); this interaction occurs rapidly, but transiently after Sendai virus infection. The interaction with DDX3X potentiates MAVS-mediated IFNB induction. Conversely inhibition of this interaction, for instance by HCV core protein, prevents MAVS-mediated IFNB induction. Transiently interacts with TRAF3 early during Sendai virus infection. Interacts with CLPB; the interaction is enhanced by Sendai virus infection. Interacts with TRAF3IP3. Interacts with TOMM70; the interaction is enhanced by Sendai virus infection. Interacts with ZNFX1. Interacts with N4BP3; this interaction promotes the polyubiquitination of MAVS. Interacts with TAX1BP1; this interaction induces MAVS polyubiquitination. Interacts with NLRP3; promoting NLRP3 recruitment to mitochondria and activation of the NLRP3 inflammasome. Interacts with ECSIT; this interaction bridges RIGI to the MAVS complex at the mitochondrion. Interacts with UBL7; this interaction promotes MAVS 'Lys-27'-linked ubiquitination leading to type I interferon production. Interacts (via transmembrane domain) with SMIM30/MAVI1 (via transmembrane domain); the interaction disrupts MAVS interaction with RIGI and inhibits MAVS aggregation, resulting in the repression of type I interferon signaling and innate immune responses. (Microbial infection) Interacts with hepatitis C virus (HCV) NS3/4A protease; this interaction leads to MAVS cleavage, thereby preventing the establishment of an antiviral state. In terms of assembly, (Microbial infection) Interacts with hepatitis GB virus B NS3/4A protease; this interaction leads to MAVS cleavage. As to quaternary structure, (Microbial infection) Interacts with human respiratory syncytial virus/HRSV protein NS1; this interaction disrupts MAVS binding to RIGI. (Microbial infection) Interacts with Andes virus Nnon-structural protein NS-S; this interaction may reduce MAVS ubiquitination and leads to inhibition of MAVS-induced type-I IFN signaling pathway. In terms of assembly, (Microbial infection) Interacts with Seneca Valley virus protease 3C; this interaction allows the cleavage of MAVS and subsequent suppression of host innate immunity. As to quaternary structure, (Microbial infection) Interacts with SARS-CoV virus protein ORF9b; this interaction mediates MAVS proteasomal degradation. (Microbial infection) Interacts with SARS-CoV-2 virus protein M; this interaction impairs MAVS self-association and its recruitment of downstream components. In terms of assembly, (Microbial infection) Interacts with foot-and-mouth disease virus protein VP1; this interaction competes with TRAF3 interaction to MAVS leading to suppression of host innate immunity. As to quaternary structure, (Microbial infection) Interacts with Epstein-Barr virus protein BILF1; this interaction mediates MAVS routing from mitochondria to lysosomes. Post-translationally, following activation, phosphorylated by TBK1 at Ser-442 in the pLxIS motif. The phosphorylated pLxIS motif constitutes an IRF3-binding motif, leading to recruitment of the transcription factor IRF3 to induce type-I interferons and other cytokines. In terms of processing, ubiquitinated. Undergoes 'Lys-48'-linked polyubiquitination catalyzed by ITCH; ITCH-dependent polyubiquitination is mediated by the interaction with PCBP2 and leads to MAVS/IPS1 proteasomal degradation. Ubiquitinated by RNF125, leading to its degradation by the proteasome. Undergoes 'Lys-48'-linked ubiquitination catalyzed by SMURF1. Undergoes 'Lys-48'-linked ubiquitination catalyzed by MARCHF5 at Lys-7 and Lys-500, leading to proteasomal degradation. Ubiquitinated via 'Lys-63'-linked ubiquitination at Lys-10, Lys-311 and Lys-461 by UBE2N and TRIM31, promoting MAVS polymerization and formation of three-stranded helical filaments on mitochondria. Undergoes 'Lys-63'-linked ubiquitination leading to enhanced interaction between MAVS and TRAF2. Undergoes 'Lys-27'-linked ubiquitination by TRIM21 leading to enhanced interaction between MAVS and TBK1. Deubiquitinated by USP10 leading to attenuation of RIGI-mediated MAVS aggregation and production of type I interferon. Undergoes 'Lys-48'-linked polyubiquitination catalyzed by RNF115 leading to its degradation. Palmitoylated by ZHDDC4. Palmitoylation promotes MAVS stabilization and activation by inhibiting 'Lys-48'- but facilitating 'Lys-63'-linked ubiquitination. Post-translationally, proteolytically cleaved by apoptotic caspases during apoptosis, leading to its inactivation. Cleavage by CASP3 during virus-induced apoptosis inactivates it, preventing cytokine overproduction. In terms of processing, (Microbial infection) Cleaved and degraded by hepatitis A virus (HAV) protein 3ABC allowing the virus to disrupt the activation of host IRF3 through the MDA5 pathway. (Microbial infection) Cleaved by the protease 2A of coxsackievirus B3, poliovirus and enterovirus 71 allowing the virus to disrupt the host type I interferon production. Post-translationally, (Microbial infection) Cleaved by Seneca Valley virus protease 3C allowing the virus to suppress interferon type-I production. In terms of processing, (Microbial infection) Cleaved by HCV protease NS3/4A, thereby preventing the establishment of an antiviral state. (Microbial infection) UFMylated by ULF1 in association with Epstein-Barr virus BILF1; leading to MAVS routing to the lysosome. In terms of tissue distribution, present in T-cells, monocytes, epithelial cells and hepatocytes (at protein level). Ubiquitously expressed, with highest levels in heart, skeletal muscle, liver, placenta and peripheral blood leukocytes.

It is found in the mitochondrion outer membrane. Its subcellular location is the mitochondrion. The protein resides in the peroxisome. Its function is as follows. Adapter required for innate immune defense against viruses. Acts downstream of DHX33, RIGI and IFIH1/MDA5, which detect intracellular dsRNA produced during viral replication, to coordinate pathways leading to the activation of NF-kappa-B, IRF3 and IRF7, and to the subsequent induction of antiviral cytokines such as IFNB and RANTES (CCL5). Peroxisomal and mitochondrial MAVS act sequentially to create an antiviral cellular state. Upon viral infection, peroxisomal MAVS induces the rapid interferon-independent expression of defense factors that provide short-term protection, whereas mitochondrial MAVS activates an interferon-dependent signaling pathway with delayed kinetics, which amplifies and stabilizes the antiviral response. May activate the same pathways following detection of extracellular dsRNA by TLR3. May protect cells from apoptosis. Involved in NLRP3 inflammasome activation by mediating NLRP3 recruitment to mitochondria. In Homo sapiens (Human), this protein is Mitochondrial antiviral-signaling protein.